A 1143-amino-acid polypeptide reads, in one-letter code: uncharacterized protein (1143 aa).

Positions 1–20 are cleaved as a signal peptide; that stretch reads MKLLLLALILVLSNINLISG. Over 21 to 1121 the chain is Extracellular; the sequence is NGLVWPHPRL…PAAGGEDSSA (1101 aa). Residues 177–203 show a composition bias toward gly residues; sequence NSGGSWSSGGSGNSGGGWSSGGSGNSG. A disordered region spans residues 177 to 1120; the sequence is NSGGSWSSGG…EPAAGGEDSS (944 aa). The span at 222 to 236 shows a compositional bias: low complexity; sequence SSGGWTSGSHSSGSW. Positions 237–283 are enriched in gly residues; sequence SSGGGSGSSSGGQSSGSWSSGGGSSSGGHSSGSWSSGGGSSAGGGSS. Over residues 284–296 the composition is skewed to low complexity; it reads SGSHSSGSWSSGG. The span at 297-330 shows a compositional bias: gly residues; sequence SSSGGQSSGSWSSGGGSSSGGQSSGSWSSGGGSS. Residues 331 to 368 show a composition bias toward low complexity; it reads SGSHSSGSWSSGGSSSGSHSSGSWSSGGSSSSSGNSGW. Residues 374–392 are compositionally biased toward gly residues; that stretch reads GNTGGNTGGNTGGNTGGQS. A compositionally biased stretch (low complexity) spans 393–403; that stretch reads SGNSGWMTASG. 2 stretches are compositionally biased toward gly residues: residues 404–418 and 430–444; these read GNTG…GGQS. 2 stretches are compositionally biased toward low complexity: residues 445-498 and 506-541; these read SGSS…TSSG and GSSS…SSGD. Composition is skewed to gly residues over residues 555–573, 580–596, 604–622, 629–783, 790–843, and 851–905; these read GNTG…GGNS, GNSG…GGNS, and GNSG…GGAS. Residues 906–1059 show a composition bias toward low complexity; it reads GAATGANSGA…GGNGASGAAN (154 aa). Residues 1062–1078 are compositionally biased toward polar residues; that stretch reads SIVTPNDQNVSPLSNSD. Positions 1094 to 1114 are enriched in low complexity; sequence PTSRAPTVTPTPTSSAEEPAA. A helical transmembrane segment spans residues 1122-1142; that stretch reads ISKYSIQSFGIFVLSMIIYLV. A topological domain (cytoplasmic) is located at residue Ile-1143.

Its subcellular location is the membrane. This is an uncharacterized protein from Dictyostelium discoideum (Social amoeba).